Consider the following 77-residue polypeptide: MKNIVPDYRLDMVGEPCPYPAVATLEAMPQLKKGEILEVVSDCPQSINNIPLDARNHGYTVLDIQQDGPTIRYLIQK.

Cys17 functions as the Cysteine persulfide intermediate in the catalytic mechanism.

It belongs to the sulfur carrier protein TusA family.

The sequence is that of Putative sulfur carrier protein YedF (yedF) from Escherichia coli O157:H7.